A 253-amino-acid chain; its full sequence is uncharacterized protein (253 aa).

7-14 (GKGGVGKT) contacts ATP.

The protein to M.jannaschii MJ0084 and MJ0823.

This is an uncharacterized protein from Methanocaldococcus jannaschii (strain ATCC 43067 / DSM 2661 / JAL-1 / JCM 10045 / NBRC 100440) (Methanococcus jannaschii).